The primary structure comprises 258 residues: Indole-3-glycerol phosphate synthase (258 aa).

The protein belongs to the TrpC family.

It catalyses the reaction 1-(2-carboxyphenylamino)-1-deoxy-D-ribulose 5-phosphate + H(+) = (1S,2R)-1-C-(indol-3-yl)glycerol 3-phosphate + CO2 + H2O. The protein operates within amino-acid biosynthesis; L-tryptophan biosynthesis; L-tryptophan from chorismate: step 4/5. The protein is Indole-3-glycerol phosphate synthase of Campylobacter jejuni subsp. doylei (strain ATCC BAA-1458 / RM4099 / 269.97).